A 188-amino-acid polypeptide reads, in one-letter code: Elongation factor P-like protein (188 aa).

The protein belongs to the elongation factor P family.

The protein is Elongation factor P-like protein of Xylella fastidiosa (strain M12).